The chain runs to 501 residues: LIM domain-containing protein HDR3 (501 aa).

The disordered stretch occupies residues 33–67; sequence GEANRRRPRVTAGEETTLWEEPVRPKKEEPPRHNN. Over residues 53–67 the composition is skewed to basic and acidic residues; sequence EPVRPKKEEPPRHNN. UIM domains follow at residues 65-84 and 94-113; these read HNNE…DAKN and ENDE…NPYQ. Residues 131-191 form the LIM zinc-binding domain; sequence RVCGGCKHEI…KLCYKELHHP (61 aa). The interval 429-448 is disordered; sequence YASSSSSSCRPPPSKKGGIS.

In terms of assembly, interacts (via N-terminus) with GW6A (via C-terminus).

In terms of biological role, ubiquitin receptor that functions as a positive regulator of grain size and weight. Functions in the same genetic pathway as GW6A to regulate grain size. Modulates grain size in a similar manner to GW6A, by altering cell proliferation in spikelet hulls. Interacts with and enhances the ubiquitination of GW6A. This stabilizes GW6A, delays protein degradation by the 26S proteasome and enhances GW6A histone acetyltransferase activity. This is LIM domain-containing protein HDR3 from Oryza sativa subsp. japonica (Rice).